The primary structure comprises 562 residues: Glucan 1,3-beta-glucosidase 2 (562 aa).

The first 22 residues, 1–22, serve as a signal peptide directing secretion; the sequence is MPLKSFFFSAFLVLCLSKFTQG. N-linked (GlcNAc...) asparagine glycosylation is found at N50, N77, N86, N90, N106, N157, and N220. The active-site Proton donor is E254. Residues N281, N285, N310, N317, and N322 are each glycosylated (N-linked (GlcNAc...) asparagine). H334 acts as the Nucleophile in catalysis. 3 N-linked (GlcNAc...) asparagine glycosylation sites follow: N401, N480, and N539.

This sequence belongs to the glycosyl hydrolase 5 (cellulase A) family.

Its subcellular location is the cell membrane. The enzyme catalyses Successive hydrolysis of beta-D-glucose units from the non-reducing ends of (1-&gt;3)-beta-D-glucans, releasing alpha-glucose.. The chain is Glucan 1,3-beta-glucosidase 2 (EXG2) from Saccharomyces cerevisiae (strain ATCC 204508 / S288c) (Baker's yeast).